Here is a 232-residue protein sequence, read N- to C-terminus: Ribosomal RNA small subunit methyltransferase G (232 aa).

The tract at residues 1–24 (MVDTALHPIPGRRTPPHPRSTLPL) is disordered. Residues glycine 91, leucine 96, 142–143 (AE), and arginine 160 contribute to the S-adenosyl-L-methionine site.

Belongs to the methyltransferase superfamily. RNA methyltransferase RsmG family.

The protein localises to the cytoplasm. Specifically methylates the N7 position of guanine in position 518 of 16S rRNA. The sequence is that of Ribosomal RNA small subunit methyltransferase G from Corynebacterium efficiens (strain DSM 44549 / YS-314 / AJ 12310 / JCM 11189 / NBRC 100395).